The sequence spans 130 residues: MRHRNGLRKLNRTSSHRLAMFRNLTNSLLEHEIIKTTLPKAKELRRVVEPVITLGKNPTLASKRLAFDRLRNRENVVKIFSELGPRYQNRNGGYLRILKCGFRKGDNAPMAIVELLDRSEANNDIVNIAE.

The protein belongs to the bacterial ribosomal protein bL17 family. As to quaternary structure, part of the 50S ribosomal subunit. Contacts protein L32.

The sequence is that of Large ribosomal subunit protein bL17 from Nitrosomonas eutropha (strain DSM 101675 / C91 / Nm57).